The chain runs to 177 residues: Ubiquinol-cytochrome c reductase iron-sulfur subunit (177 aa).

The chain crosses the membrane as a helical span at residues 18 to 38 (MVLTASSVAAVGAVCTLWPLV). In terms of domain architecture, Rieske spans 88-175 (ARAVKMSELI…YTFISDKKIR (88 aa)). [2Fe-2S] cluster is bound by residues cysteine 120, histidine 122, cysteine 139, and histidine 142. A disulfide bond links cysteine 125 and cysteine 141.

The protein belongs to the Rieske iron-sulfur protein family. As to quaternary structure, the main subunits of complex b-c1 are: cytochrome b, cytochrome c1 and the Rieske protein. [2Fe-2S] cluster serves as cofactor.

The protein localises to the cell membrane. It carries out the reaction a quinol + 2 Fe(III)-[cytochrome c](out) = a quinone + 2 Fe(II)-[cytochrome c](out) + 2 H(+)(out). Component of the ubiquinol-cytochrome c reductase complex (complex III or cytochrome b-c1 complex), which is a respiratory chain that generates an electrochemical potential coupled to ATP synthesis. This chain is Ubiquinol-cytochrome c reductase iron-sulfur subunit (petA), found in Rickettsia felis (strain ATCC VR-1525 / URRWXCal2) (Rickettsia azadi).